Reading from the N-terminus, the 495-residue chain is Cytochrome P450 Tp4149 (495 aa).

2 consecutive transmembrane segments (helical) span residues 4–24 and 208–228; these read ILSL…MFFI and YLSM…SWVD. Asn419 is a glycosylation site (N-linked (GlcNAc...) asparagine). Heme is bound at residue Cys437.

This sequence belongs to the cytochrome P450 family. Heme serves as cofactor.

It is found in the membrane. The protein operates within secondary metabolite biosynthesis; terpenoid biosynthesis. Functionally, probably involved in the biosynthesis of germacrene-derived sesquiterpene lactones. The protein is Cytochrome P450 Tp4149 of Tanacetum parthenium (Feverfew).